Reading from the N-terminus, the 425-residue chain is Monoacylglycerol lipase ABHD2 (425 aa).

Residues 1–9 (MNAMLETPE) lie on the Cytoplasmic side of the membrane. Residues 10–30 (LPAVFDGVKLAAVAAVLYVIV) traverse the membrane as a helical; Signal-anchor for type II membrane protein segment. Topologically, residues 31-425 (RCLNLKSPTA…DTEQVEADLE (395 aa)) are extracellular. The AB hydrolase-1 domain occupies 128–382 (MVICPGIANH…HGGHLGFFEG (255 aa)). N-linked (GlcNAc...) asparagine glycosylation occurs at Asn136. Ser207 functions as the Nucleophile in the catalytic mechanism. Residues Asp345 and His376 each act as charge relay system in the active site. A glycan (N-linked (GlcNAc...) asparagine) is linked at Asn410.

The protein belongs to the AB hydrolase superfamily. AB hydrolase 4 family.

The protein resides in the cell membrane. It catalyses the reaction Hydrolyzes glycerol monoesters of long-chain fatty acids.. The enzyme catalyses an acetyl ester + H2O = an aliphatic alcohol + acetate + H(+). The catalysed reaction is a triacylglycerol + H2O = a diacylglycerol + a fatty acid + H(+). It carries out the reaction 2-(5Z,8Z,11Z,14Z-eicosatetraenoyl)-glycerol + H2O = glycerol + (5Z,8Z,11Z,14Z)-eicosatetraenoate + H(+). It catalyses the reaction a butanoate ester + H2O = an aliphatic alcohol + butanoate + H(+). The enzyme catalyses hexadecanoate ester + H2O = an aliphatic alcohol + hexadecanoate + H(+). With respect to regulation, acylglycerol lipase activity is activated upon binding to progesterone. In terms of biological role, progesterone-dependent acylglycerol lipase that catalyzes hydrolysis of endocannabinoid arachidonoylglycerol (AG) from cell membrane. Acts as a progesterone receptor: progesterone-binding activates the acylglycerol lipase activity, mediating degradation of 1-arachidonoylglycerol (1AG) and 2-arachidonoylglycerol (2AG) to glycerol and arachidonic acid (AA). Also displays an ester hydrolase activity against acetyl ester, butanoate ester and hexadecanoate ester. Plays a key role in sperm capacitation in response to progesterone by mediating degradation of 2AG, an inhibitor of the sperm calcium channel CatSper, leading to calcium influx via CatSper and sperm activation. May also play a role in smooth muscle cells migration. This chain is Monoacylglycerol lipase ABHD2 (ABHD2), found in Macaca fascicularis (Crab-eating macaque).